The chain runs to 35 residues: LVKCRGTSDCGRPCQQQTGCPNSKCINRMCKCYGC.

Disulfide bonds link C4–C25, C10–C30, C14–C32, and C20–C35.

It belongs to the short scorpion toxin superfamily. Potassium channel inhibitor family. Alpha-KTx 06 subfamily. Expressed by the venom gland.

The protein resides in the secreted. Its function is as follows. Potently and reversibly inhibits the insect voltage-gated Shaker (Sh) potassium channel (isoform alpha (B)), the mammalian voltage-gated potassium channels Kv1.2/KCNA2 (IC(50)=0.44 nM), and the calcium-activated potassium channel KCa2.3/KCNN3 (Kd=330 nM). Its effect on Kv1.3/KCNA3 is controversial, since this channel is voltage-independently inhibited in PubMed:9464266, but is not affected in PubMed:10931199. Furthermore, this toxin competes with apamin (a small conductance calcium-activated potassium channel inhibitor) for binding to rat brain synaptosomes. In Pandinus imperator (Emperor scorpion), this protein is Potassium channel toxin alpha-KTx 6.1.